We begin with the raw amino-acid sequence, 259 residues long: Nuclear egress protein 1 (259 aa).

A CCCH-type zinc finger spans residues 80–184 (CLDLSPYANE…YVVFQTRTLH (105 aa)).

The protein belongs to the herpesviridae NEC1 protein family. Forms a heterohexameric complex with NEC2. Interacts with capsid vertex specific component 2/CVC2; this interaction directs the capsid to the host inner nuclear membrane to initiate budding. Post-translationally, phosphorylated at serine residues in the N-terminus. This phosphorylation regulates the localization within the inner nuclear membrane.

It localises to the host nucleus inner membrane. Plays an essential role in virion nuclear egress, the first step of virion release from infected cell. Within the host nucleus, NEC1 interacts with the newly formed capsid through the vertexes and directs it to the inner nuclear membrane by associating with NEC2. Induces the budding of the capsid at the inner nuclear membrane as well as its envelopment into the perinuclear space. There, the NEC1/NEC2 complex promotes the fusion of the enveloped capsid with the outer nuclear membrane and the subsequent release of the viral capsid into the cytoplasm where it will reach the secondary budding sites in the host Golgi or trans-Golgi network. This Homo sapiens (Human) protein is Nuclear egress protein 1.